The primary structure comprises 545 residues: Calcium-binding mitochondrial carrier SAL1 (545 aa).

The EF-hand 1 domain maps to 11 to 46 (QRDIRYACLFKELDVKGNGQVTLDNLISAFEKNDHP). Ca(2+) contacts are provided by K65, D70, D93, D95, D97, K99, and E104. 3 consecutive EF-hand domains span residues 80-115 (NAES…LDNQ), 120-155 (NELN…RGQA), and 156-191 (SHKK…VPRK). Ca(2+)-binding residues include T161 and S166. 3 Solcar repeats span residues 225 to 332 (IRGF…TKKI), 345 to 434 (LSKF…LKKW), and 452 to 541 (LSNL…LKKF). 6 helical membrane-spanning segments follow: residues 231 to 248 (FIAG…TAPF), 307 to 326 (GNGL…FGSF), 355 to 368 (GLAG…VYPI), 409 to 428 (GVTV…LGTF), 458 to 475 (LPMG…VYPI), and 516 to 535 (GLVP…YLCY).

Belongs to the mitochondrial carrier (TC 2.A.29) family.

Its subcellular location is the mitochondrion inner membrane. Functionally, calcium-dependent mitochondrial solute carrier. In Saccharomyces cerevisiae (Baker's yeast), this protein is Calcium-binding mitochondrial carrier SAL1 (SAL1).